The following is a 246-amino-acid chain: Auxin-responsive protein IAA25 (246 aa).

Residues 1–22 (MKSSSVAPRLKQERQDDCKFQE) are disordered. Basic and acidic residues predominate over residues 10–22 (LKQERQDDCKFQE). The EAR-like (transcriptional repression) signature appears at 28–32 (LELRL). A PB1 domain is found at 143–238 (TMFVKVNLEG…SVKRLYIAQD (96 aa)).

This sequence belongs to the Aux/IAA family. As to quaternary structure, homodimers and heterodimers. As to expression, highly expressed in flowers. Expressed in roots and seedlings.

It is found in the nucleus. Functionally, aux/IAA proteins are short-lived transcriptional factors that function as repressors of early auxin response genes at low auxin concentrations. The sequence is that of Auxin-responsive protein IAA25 (IAA25) from Oryza sativa subsp. japonica (Rice).